A 473-amino-acid polypeptide reads, in one-letter code: Probable glucose-6-phosphate 1-dehydrogenase C7.13c (473 aa).

The NADP(+) site is built by arginine 43, tyrosine 121, and lysine 144. D-glucose 6-phosphate contacts are provided by residues lysine 144, 174-178 (HYTAK), glutamate 213, and aspartate 232. Histidine 237 serves as the catalytic Proton acceptor. D-glucose 6-phosphate is bound at residue lysine 331. Residue lysine 341 participates in NADP(+) binding. Glutamine 366 serves as a coordination point for D-glucose 6-phosphate.

It belongs to the glucose-6-phosphate dehydrogenase family.

The protein localises to the cytoplasm. It carries out the reaction D-glucose 6-phosphate + NADP(+) = 6-phospho-D-glucono-1,5-lactone + NADPH + H(+). Its pathway is carbohydrate degradation; pentose phosphate pathway; D-ribulose 5-phosphate from D-glucose 6-phosphate (oxidative stage): step 1/3. Functionally, catalyzes the rate-limiting step of the oxidative pentose-phosphate pathway, which represents a route for the dissimilation of carbohydrates besides glycolysis. The main function of this enzyme is to provide reducing power (NADPH) and pentose phosphates for fatty acid and nucleic acid synthesis. This is Probable glucose-6-phosphate 1-dehydrogenase C7.13c from Schizosaccharomyces pombe (strain 972 / ATCC 24843) (Fission yeast).